Consider the following 245-residue polypeptide: 1-(5-phosphoribosyl)-5-[(5-phosphoribosylamino)methylideneamino] imidazole-4-carboxamide isomerase (245 aa).

The active-site Proton acceptor is the aspartate 7. Aspartate 129 acts as the Proton donor in catalysis.

Belongs to the HisA/HisF family.

The protein resides in the cytoplasm. It catalyses the reaction 1-(5-phospho-beta-D-ribosyl)-5-[(5-phospho-beta-D-ribosylamino)methylideneamino]imidazole-4-carboxamide = 5-[(5-phospho-1-deoxy-D-ribulos-1-ylimino)methylamino]-1-(5-phospho-beta-D-ribosyl)imidazole-4-carboxamide. Its pathway is amino-acid biosynthesis; L-histidine biosynthesis; L-histidine from 5-phospho-alpha-D-ribose 1-diphosphate: step 4/9. The sequence is that of 1-(5-phosphoribosyl)-5-[(5-phosphoribosylamino)methylideneamino] imidazole-4-carboxamide isomerase from Shewanella sp. (strain ANA-3).